The following is a 359-amino-acid chain: GTLLLLLSEALALTETWAGSHSLKYFHTSVSRPGRGEPRFISVGYVDDTQFVRFDNDAASPRMVPRAQWMEQEGPEYWDRETRSARDTAQTFRVNLRTLRGYYNQTEAGSHTLQWMHGCDLGPDGRFLRGYEQFAYDGKDYLTLNEDLRSWTAVDTAAQISERKSNDACEAEHQRAYLEDTCVEWLRKYLEKGKETLLHLDPPKTHVTHHRISDHEATLRCWALGFYPAEITLTWQRDGEDQNQYTELVETRPAGDGTFQKWAAVVVPSGEEQRYTCHVQHEGLPEPLTLRWEPASQTTIPIVGIFAGLVLLGAVVTGATVVAAVMWRKKSSGGKGGSYSKAEWSDSAQGSESLTACKA.

The N-terminal stretch at 1–18 (GTLLLLLSEALALTETWA) is a signal peptide. Residues 19–108 (GSHSLKYFHT…LRGYYNQTEA (90 aa)) form an alpha-1 region. Topologically, residues 19-302 (GSHSLKYFHT…EPASQTTIPI (284 aa)) are extracellular. Residue N104 is glycosylated (N-linked (GlcNAc...) asparagine). Positions 109 to 200 (GSHTLQWMHG…EKGKETLLHL (92 aa)) are alpha-2. 2 disulfides stabilise this stretch: C119-C182 and C221-C277. The interval 201–292 (DPPKTHVTHH…GLPEPLTLRW (92 aa)) is alpha-3. Residues 203 to 291 (PKTHVTHHRI…EGLPEPLTLR (89 aa)) enclose the Ig-like C1-type domain. The segment at 293–302 (EPASQTTIPI) is connecting peptide. The chain crosses the membrane as a helical span at residues 303–326 (VGIFAGLVLLGAVVTGATVVAAVM). Over 327–359 (WRKKSSGGKGGSYSKAEWSDSAQGSESLTACKA) the chain is Cytoplasmic. The disordered stretch occupies residues 330-359 (KSSGGKGGSYSKAEWSDSAQGSESLTACKA). Residues 346-359 (DSAQGSESLTACKA) show a composition bias toward polar residues. At S351 the chain carries Phosphoserine.

The protein belongs to the MHC class I family. In terms of assembly, heterodimer of an alpha chain and a beta chain (beta-2-microglobulin).

The protein resides in the membrane. Involved in the presentation of foreign antigens to the immune system. In Pongo pygmaeus (Bornean orangutan), this protein is Popy class I histocompatibility antigen, alpha chain E (Popy-E).